Here is a 531-residue protein sequence, read N- to C-terminus: Transcription termination/antitermination protein NusA (531 aa).

In terms of domain architecture, S1 motif spans 165–235; the sequence is GEVIEAKVED…SLWPITLSRS (71 aa). Positions 340-410 constitute a KH domain; that stretch reads DTSIEVVVPA…FGIKKRREKI (71 aa). A compositionally biased stretch (basic and acidic residues) spans 463-475; sequence EKQVTPKEKEKVQ. Positions 463 to 531 are disordered; it reads EKQVTPKEKE…KQTFDSFDDL (69 aa). Over residues 476 to 490 the composition is skewed to basic residues; the sequence is PKAKVHSNSHSKKPA. The segment covering 502–512 has biased composition (basic and acidic residues); it reads ASDKNLKKDQV. Over residues 513 to 531 the composition is skewed to polar residues; it reads DNNQTNPQTKQTFDSFDDL.

Belongs to the NusA family. As to quaternary structure, monomer. Binds directly to the core enzyme of the DNA-dependent RNA polymerase and to nascent RNA.

Its subcellular location is the cytoplasm. Participates in both transcription termination and antitermination. The chain is Transcription termination/antitermination protein NusA from Mycoplasma genitalium (strain ATCC 33530 / DSM 19775 / NCTC 10195 / G37) (Mycoplasmoides genitalium).